Here is a 387-residue protein sequence, read N- to C-terminus: ADP,ATP carrier protein 2, mitochondrial (387 aa).

Residues 1–77 constitute a mitochondrion transit peptide; that stretch reads MADQANQPTV…PVMPTPLFAN (77 aa). 3 Solcar repeats span residues 85–178, 190–282, and 290–376; these read KNFM…FKRL, KWFA…IKPV, and DNFF…LQIL. Transmembrane regions (helical) follow at residues 87-114, 155-179, 188-208, 258-279, and 293-313; these read FMIDFMMGGVSAAVSKTAAAPIERVKLL, TANVIRYFPTQALNFAFKDYFKRLF, YWKWFAGNLASGGAAGASSLF, FNISCVGIIVYRGLYFGLYDSI, and FASFALGWLITNGAGLASYPI. ADP is bound by residues arginine 160 and lysine 172. Position 317 (arginine 317) interacts with ADP. Positions 317 to 322 are important for transport activity; the sequence is RRRMMM. The short motif at 317–322 is the Nucleotide carrier signature motif element; sequence RRRMMM. A helical membrane pass occupies residues 353–373; sequence AGANILRAIAGAGVLSGYDQL.

It belongs to the mitochondrial carrier (TC 2.A.29) family. As to quaternary structure, monomer.

It is found in the mitochondrion inner membrane. The catalysed reaction is ADP(in) + ATP(out) = ADP(out) + ATP(in). With respect to regulation, the matrix-open state (m-state) is inhibited by the membrane-permeable bongkrekic acid (BKA). The cytoplasmic-open state (c-state) is inhibited by the membrane-impermeable toxic inhibitor carboxyatractyloside (CATR). ADP:ATP antiporter that mediates import of ADP into the mitochondrial matrix for ATP synthesis, and export of ATP out to fuel the cell. Cycles between the cytoplasmic-open state (c-state) and the matrix-open state (m-state): operates by the alternating access mechanism with a single substrate-binding site intermittently exposed to either the cytosolic (c-state) or matrix (m-state) side of the inner mitochondrial membrane. The polypeptide is ADP,ATP carrier protein 2, mitochondrial (ANT2) (Zea mays (Maize)).